A 429-amino-acid chain; its full sequence is UPF0597 protein BT_2080 (429 aa).

This sequence belongs to the UPF0597 family.

The chain is UPF0597 protein BT_2080 from Bacteroides thetaiotaomicron (strain ATCC 29148 / DSM 2079 / JCM 5827 / CCUG 10774 / NCTC 10582 / VPI-5482 / E50).